A 101-amino-acid polypeptide reads, in one-letter code: MFVKKGDKVRVIAGKDKGTEAVVLKALPKVNKVIVEGVGMIKKHQKPNTENPQGAIVEKEAPIHVSNVQVLDKNGVAGRVGYKVVDGKKVRYSKKSGEVLD.

The protein belongs to the universal ribosomal protein uL24 family. As to quaternary structure, part of the 50S ribosomal subunit.

Functionally, one of two assembly initiator proteins, it binds directly to the 5'-end of the 23S rRNA, where it nucleates assembly of the 50S subunit. Its function is as follows. One of the proteins that surrounds the polypeptide exit tunnel on the outside of the subunit. This Streptococcus pyogenes serotype M2 (strain MGAS10270) protein is Large ribosomal subunit protein uL24.